The following is a 319-amino-acid chain: Acetyl-coenzyme A carboxylase carboxyl transferase subunit alpha (319 aa).

Residues 38–293 (HALQDKLRLR…KAVLLNELDA (256 aa)) enclose the CoA carboxyltransferase C-terminal domain.

This sequence belongs to the AccA family. In terms of assembly, acetyl-CoA carboxylase is a heterohexamer composed of biotin carboxyl carrier protein (AccB), biotin carboxylase (AccC) and two subunits each of ACCase subunit alpha (AccA) and ACCase subunit beta (AccD).

The protein resides in the cytoplasm. It catalyses the reaction N(6)-carboxybiotinyl-L-lysyl-[protein] + acetyl-CoA = N(6)-biotinyl-L-lysyl-[protein] + malonyl-CoA. It functions in the pathway lipid metabolism; malonyl-CoA biosynthesis; malonyl-CoA from acetyl-CoA: step 1/1. Its function is as follows. Component of the acetyl coenzyme A carboxylase (ACC) complex. First, biotin carboxylase catalyzes the carboxylation of biotin on its carrier protein (BCCP) and then the CO(2) group is transferred by the carboxyltransferase to acetyl-CoA to form malonyl-CoA. This Stenotrophomonas maltophilia (strain R551-3) protein is Acetyl-coenzyme A carboxylase carboxyl transferase subunit alpha.